The sequence spans 985 residues: Phosphoenolpyruvate carboxylase (985 aa).

Positions Met1–Arg17 are enriched in low complexity. Positions Met1–Asp55 are disordered. Catalysis depends on residues His193 and Lys634.

This sequence belongs to the PEPCase type 1 family. The cofactor is Mg(2+).

The enzyme catalyses oxaloacetate + phosphate = phosphoenolpyruvate + hydrogencarbonate. In terms of biological role, forms oxaloacetate, a four-carbon dicarboxylic acid source for the tricarboxylic acid cycle. The chain is Phosphoenolpyruvate carboxylase from Ralstonia nicotianae (strain ATCC BAA-1114 / GMI1000) (Ralstonia solanacearum).